A 429-amino-acid polypeptide reads, in one-letter code: Serine--tRNA ligase (429 aa).

T236 to E238 provides a ligand contact to L-serine. R267–E269 serves as a coordination point for ATP. Position 290 (E290) interacts with L-serine. E354–S357 lines the ATP pocket. An L-serine-binding site is contributed by S390.

This sequence belongs to the class-II aminoacyl-tRNA synthetase family. Type-1 seryl-tRNA synthetase subfamily. In terms of assembly, homodimer. The tRNA molecule binds across the dimer.

It localises to the cytoplasm. It carries out the reaction tRNA(Ser) + L-serine + ATP = L-seryl-tRNA(Ser) + AMP + diphosphate + H(+). The catalysed reaction is tRNA(Sec) + L-serine + ATP = L-seryl-tRNA(Sec) + AMP + diphosphate + H(+). It participates in aminoacyl-tRNA biosynthesis; selenocysteinyl-tRNA(Sec) biosynthesis; L-seryl-tRNA(Sec) from L-serine and tRNA(Sec): step 1/1. In terms of biological role, catalyzes the attachment of serine to tRNA(Ser). Is also able to aminoacylate tRNA(Sec) with serine, to form the misacylated tRNA L-seryl-tRNA(Sec), which will be further converted into selenocysteinyl-tRNA(Sec). This is Serine--tRNA ligase from Alcanivorax borkumensis (strain ATCC 700651 / DSM 11573 / NCIMB 13689 / SK2).